A 295-amino-acid chain; its full sequence is Putative xyloglucan endotransglucosylase/hydrolase protein 1 (295 aa).

A signal peptide spans 1 to 24 (MNKMEYLSIFGFVSVLYLIIRVDA). Residues 27 to 225 (YEVNGIDQSK…WSLAPFKANF (199 aa)) enclose the GH16 domain. Glu-113 serves as the catalytic Nucleophile. Catalysis depends on Glu-117, which acts as the Proton donor. Xyloglucan-binding positions include Glu-117, 129 to 131 (QTN), and 139 to 141 (NRE). A glycan (N-linked (GlcNAc...) asparagine) is linked at Asn-180. Xyloglucan-binding positions include 204–205 (NW) and Gly-209. Asn-215 and Asn-229 each carry an N-linked (GlcNAc...) asparagine glycan. 2 disulfide bridges follow: Cys-233/Cys-242 and Cys-278/Cys-291. Arg-283 is a xyloglucan binding site.

It belongs to the glycosyl hydrolase 16 family. XTH group 1 subfamily. Post-translationally, contains at least one intrachain disulfide bond essential for its enzymatic activity.

Its subcellular location is the secreted. The protein localises to the cell wall. The protein resides in the extracellular space. It localises to the apoplast. The catalysed reaction is breaks a beta-(1-&gt;4) bond in the backbone of a xyloglucan and transfers the xyloglucanyl segment on to O-4 of the non-reducing terminal glucose residue of an acceptor, which can be a xyloglucan or an oligosaccharide of xyloglucan.. May catalyze xyloglucan endohydrolysis (XEH) and/or endotransglycosylation (XET). Cleaves and religates xyloglucan polymers, an essential constituent of the primary cell wall, and thereby participates in cell wall construction of growing tissues. This chain is Putative xyloglucan endotransglucosylase/hydrolase protein 1 (XTH1), found in Arabidopsis thaliana (Mouse-ear cress).